Consider the following 636-residue polypeptide: Fructose-1,6-bisphosphatase class 3 (636 aa).

The protein belongs to the FBPase class 3 family. Mn(2+) serves as cofactor.

The enzyme catalyses beta-D-fructose 1,6-bisphosphate + H2O = beta-D-fructose 6-phosphate + phosphate. It functions in the pathway carbohydrate biosynthesis; gluconeogenesis. The polypeptide is Fructose-1,6-bisphosphatase class 3 (Streptococcus sanguinis (strain SK36)).